The sequence spans 304 residues: Glycine--tRNA ligase alpha subunit (304 aa).

The protein belongs to the class-II aminoacyl-tRNA synthetase family. Tetramer of two alpha and two beta subunits.

Its subcellular location is the cytoplasm. The enzyme catalyses tRNA(Gly) + glycine + ATP = glycyl-tRNA(Gly) + AMP + diphosphate. The polypeptide is Glycine--tRNA ligase alpha subunit (Yersinia enterocolitica serotype O:8 / biotype 1B (strain NCTC 13174 / 8081)).